Reading from the N-terminus, the 156-residue chain is Guanine deaminase (156 aa).

The CMP/dCMP-type deaminase domain occupies 1–132 (MNHETFLKRA…KPAEERTIPF (132 aa)). Residue His53 coordinates Zn(2+). Glu55 acts as the Proton donor in catalysis. Zn(2+)-binding residues include Cys83 and Cys86.

This sequence belongs to the cytidine and deoxycytidylate deaminase family. It depends on Zn(2+) as a cofactor.

It catalyses the reaction guanine + H2O + H(+) = xanthine + NH4(+). It functions in the pathway purine metabolism; guanine degradation; xanthine from guanine: step 1/1. Its function is as follows. Catalyzes the hydrolytic deamination of guanine, producing xanthine and ammonia. The chain is Guanine deaminase (guaD) from Bacillus subtilis (strain 168).